The primary structure comprises 405 residues: L-rhamnonate dehydratase (405 aa).

Substrate is bound by residues histidine 33 and arginine 59. Mg(2+) is bound by residues aspartate 226, glutamate 252, and glutamate 280. The active-site Proton acceptor is the histidine 329. Glutamate 349 contributes to the substrate binding site.

The protein belongs to the mandelate racemase/muconate lactonizing enzyme family. RhamD subfamily. In terms of assembly, homooctamer; tetramer of dimers. Requires Mg(2+) as cofactor.

It catalyses the reaction L-rhamnonate = 2-dehydro-3-deoxy-L-rhamnonate + H2O. In terms of biological role, catalyzes the dehydration of L-rhamnonate to 2-keto-3-deoxy-L-rhamnonate (KDR). In Escherichia coli O81 (strain ED1a), this protein is L-rhamnonate dehydratase.